Here is a 451-residue protein sequence, read N- to C-terminus: REST corepressor 3 (451 aa).

Residues 1 to 55 (MPGMMEKGPELLGKSRSANGGAKSPAGGGGSSANGGLHFSEPESGCSSDDEHGDV) are disordered. Residues 55–139 (VGMRVGAEYQ…KSLADLPNFT (85 aa)) enclose the ELM2 domain. K76 participates in a covalent cross-link: Glycyl lysine isopeptide (Lys-Gly) (interchain with G-Cter in SUMO2). An SANT domain is found at 140–191 (PFPDEWTVEDKVLFEQAFSFHGKSFHRIQQMLPDKTIASLVKYYYSWKKTRS). The interval 204-275 (ANRHNQGDSD…SQRSKCRPPK (72 aa)) is disordered. Phosphoserine occurs at positions 212 and 227. A compositionally biased stretch (basic and acidic residues) spans 218–240 (EAHPMDGNDSDYDPKKEAKREGN). K249 is covalently cross-linked (Glycyl lysine isopeptide (Lys-Gly) (interchain with G-Cter in SUMO2)). Basic residues predominate over residues 261-273 (QHRHHSQRSKCRP). The stretch at 293–329 (AANTILRQLDMELISLKRQVQNAKQVNSALKQKMEGG) forms a coiled coil. The interval 333–451 (FKPPEAQTPQ…IQTDSQPSLH (119 aa)) is disordered. Positions 349–361 (PSPPAPSSTPTPT) are enriched in pro residues. Residues 375–384 (RPTLPAAPAL) show a composition bias toward low complexity. Asymmetric dimethylarginine is present on residues R401 and R413. Positions 431–451 (VGGQQPPSLIGIQTDSQPSLH) are enriched in polar residues.

This sequence belongs to the CoREST family.

Its subcellular location is the nucleus. Its function is as follows. May act as a component of a corepressor complex that represses transcription. This chain is REST corepressor 3 (Rcor3), found in Mus musculus (Mouse).